A 303-amino-acid chain; its full sequence is Pantothenate synthetase (303 aa).

Residue 30–37 (MGYLHAGH) participates in ATP binding. Catalysis depends on histidine 37, which acts as the Proton donor. Residue glutamine 61 participates in (R)-pantoate binding. Glutamine 61 is a binding site for beta-alanine. 147–150 (GAKD) provides a ligand contact to ATP. Residue glutamine 153 participates in (R)-pantoate binding. ATP-binding positions include valine 176 and 184 to 187 (LSSR).

This sequence belongs to the pantothenate synthetase family. Homodimer.

Its subcellular location is the cytoplasm. It catalyses the reaction (R)-pantoate + beta-alanine + ATP = (R)-pantothenate + AMP + diphosphate + H(+). Its pathway is cofactor biosynthesis; (R)-pantothenate biosynthesis; (R)-pantothenate from (R)-pantoate and beta-alanine: step 1/1. In terms of biological role, catalyzes the condensation of pantoate with beta-alanine in an ATP-dependent reaction via a pantoyl-adenylate intermediate. The protein is Pantothenate synthetase of Rhizobium johnstonii (strain DSM 114642 / LMG 32736 / 3841) (Rhizobium leguminosarum bv. viciae).